The following is a 251-amino-acid chain: Triosephosphate isomerase (251 aa).

Substrate is bound at residue 9-11 (NWK). Histidine 95 functions as the Electrophile in the catalytic mechanism. Catalysis depends on glutamate 167, which acts as the Proton acceptor. Substrate-binding positions include glycine 173, serine 213, and 234–235 (GG). Serine 213 is subject to Phosphoserine.

The protein belongs to the triosephosphate isomerase family. In terms of assembly, homodimer.

Its subcellular location is the cytoplasm. The enzyme catalyses D-glyceraldehyde 3-phosphate = dihydroxyacetone phosphate. The protein operates within carbohydrate biosynthesis; gluconeogenesis. It participates in carbohydrate degradation; glycolysis; D-glyceraldehyde 3-phosphate from glycerone phosphate: step 1/1. Involved in the gluconeogenesis. Catalyzes stereospecifically the conversion of dihydroxyacetone phosphate (DHAP) to D-glyceraldehyde-3-phosphate (G3P). This chain is Triosephosphate isomerase, found in Priestia megaterium (strain DSM 319 / IMG 1521) (Bacillus megaterium).